We begin with the raw amino-acid sequence, 444 residues long: MEQATTLFILLSTLLLAVSVESPQPPLFPDEALPTKSGYLPVKPAPGSSMFYAFYEAQEPTTPLPDTPLLVWLQGGPGCSSMIGNFYELGPWRVVSRATDLERNPGAWNRLFGLLFVDNPIGVGFSIAASQQDIPTNQRQVAEHLYAALVEFLEQNPSFENRPVYFTGESYAGKYVPAIGYYILKEKPNGKVNLKGLAIGNGLTDPVTQVQTHAVNVYYSGLVNAKQRVELQKAQEISVALVKSQKWREAADARTELLTLLSNMTGLATLYNTARAIPYRTDLVVDLLNQREAKRVLGVSETVRFEECSDEVEDVLRADVMKSVKFMVEYALERTQVLLYQGMLDLRDGVVSTEEWMKTMNWSGLGMFSTAERRVWKDEDGVVAGYVQRWGNLCHVAVTGAGHFVPTDKAVNSRDMIEGWVLGKGLFGGKDVKQTTSSSLYHSI.

An N-terminal signal peptide occupies residues 1-22 (MEQATTLFILLSTLLLAVSVES). An intrachain disulfide couples cysteine 79 to cysteine 308. The active site involves serine 170. N-linked (GlcNAc...) asparagine glycosylation occurs at asparagine 263. Residue aspartate 345 is part of the active site. Asparagine 361 is a glycosylation site (N-linked (GlcNAc...) asparagine). Residue histidine 403 is part of the active site.

Belongs to the peptidase S10 family. In terms of tissue distribution, ubiquitous.

Its subcellular location is the secreted. In terms of biological role, probable carboxypeptidase. In Arabidopsis thaliana (Mouse-ear cress), this protein is Serine carboxypeptidase-like 50 (SCPL50).